Here is a 242-residue protein sequence, read N- to C-terminus: Venom nerve growth factor 2 (242 aa).

The signal sequence occupies residues Met-1–Ala-18. A propeptide spanning residues Ala-19–Arg-125 is cleaved from the precursor. The segment at Lys-46–Leu-69 is disordered. Positions Arg-52–Asp-66 are enriched in basic and acidic residues. 3 disulfides stabilise this stretch: Cys-139–Cys-203, Cys-181–Cys-231, and Cys-191–Cys-233. Asn-147 is a glycosylation site (N-linked (GlcNAc...) asparagine).

Belongs to the NGF-beta family. As to quaternary structure, homodimer; non-covalently linked. Expressed by the venom gland.

It is found in the secreted. In terms of biological role, nerve growth factor is important for the development and maintenance of the sympathetic and sensory nervous systems. It stimulates division and differentiation of sympathetic and embryonic sensory neurons as well as basal forebrain cholinergic neurons in the brain. Its relevance in the snake venom is not clear. However, it has been shown to inhibit metalloproteinase-dependent proteolysis of platelet glycoprotein Ib alpha, suggesting a metalloproteinase inhibition to prevent metalloprotease autodigestion and/or protection against prey proteases. Binds a lipid between the two protein chains in the homodimer. The lipid-bound form promotes histamine relase from mouse mast cells, contrary to the lipid-free form. This Demansia vestigiata (Lesser black whip snake) protein is Venom nerve growth factor 2.